The primary structure comprises 688 residues: MIOREX complex component 1 (688 aa).

The segment at 1 to 24 (MGLKITKGQLRTKDLNQSSSKSSQ) is disordered. The transit peptide at 1-46 (MGLKITKGQLRTKDLNQSSSKSSQSSRIGVDTCIFTRMLPRINTAI) directs the protein to the mitochondrion.

Associates with the mitochondrial ribosome.

The protein resides in the mitochondrion. Its function is as follows. Component of MIOREX complexes, large expressome-like assemblies of ribosomes with factors involved in all the steps of post-transcriptional gene expression. This Saccharomyces cerevisiae (strain ATCC 204508 / S288c) (Baker's yeast) protein is MIOREX complex component 1.